The following is a 510-amino-acid chain: uncharacterized protein (510 aa).

Belongs to the phage portal family. PBSX subfamily.

This is an uncharacterized protein from Bacillus subtilis (strain 168).